Here is a 287-residue protein sequence, read N- to C-terminus: Large ribosomal subunit protein uL2 (287 aa).

Disordered stretches follow at residues 25–57 (TKTEPEKSLTTSKHRAKGRNNTGRITSRRRGGG) and 203–287 (LSAG…GRES). 2 stretches are compositionally biased toward basic residues: residues 209-220 (GRNRWKGRRPKV) and 259-287 (TRNRKKLSSKFIVRRRRKSSKRGRGGRES).

This sequence belongs to the universal ribosomal protein uL2 family. In terms of assembly, part of the 50S ribosomal subunit. Forms a bridge to the 30S subunit in the 70S ribosome.

Its function is as follows. One of the primary rRNA binding proteins. Required for association of the 30S and 50S subunits to form the 70S ribosome, for tRNA binding and peptide bond formation. It has been suggested to have peptidyltransferase activity; this is somewhat controversial. Makes several contacts with the 16S rRNA in the 70S ribosome. This Nostoc punctiforme (strain ATCC 29133 / PCC 73102) protein is Large ribosomal subunit protein uL2.